A 69-amino-acid polypeptide reads, in one-letter code: Antimicrobial peptide ISAMP (69 aa).

A signal peptide spans 1–23 (MRAVAIFIVTLLVLECVYFVMSE).

As to expression, expressed in the fat body, hemocytes and salivary glands of partially-fed female ticks. Not expressed in the midgut.

It localises to the secreted. Its function is as follows. Has antimicrobial activity against B.cereus (MIC=5.8 ug/ml), B.subtilis (MIC=12.3 ug/ml), S.aureus (MIC=10.4 ug/ml), E.coli Edl 933 (MIC=3.2 ug/ml) and E.coli MG/655 (MIC=4.2 ug/ml). Non-hemolytic. This chain is Antimicrobial peptide ISAMP, found in Ixodes scapularis (Black-legged tick).